A 543-amino-acid chain; its full sequence is Hydroxylamine reductase (543 aa).

The [4Fe-4S] cluster site is built by cysteine 5, cysteine 8, cysteine 17, and cysteine 23. Histidine 236, glutamate 260, cysteine 304, cysteine 398, cysteine 426, cysteine 451, glutamate 486, and lysine 488 together coordinate hybrid [4Fe-2O-2S] cluster. The residue at position 398 (cysteine 398) is a Cysteine persulfide.

It belongs to the HCP family. Requires [4Fe-4S] cluster as cofactor. The cofactor is hybrid [4Fe-2O-2S] cluster.

It is found in the cytoplasm. It catalyses the reaction A + NH4(+) + H2O = hydroxylamine + AH2 + H(+). In terms of biological role, catalyzes the reduction of hydroxylamine to form NH(3) and H(2)O. The chain is Hydroxylamine reductase from Bacteroides fragilis (strain YCH46).